The sequence spans 405 residues: Glucose-1-phosphate adenylyltransferase (405 aa).

Alpha-D-glucose 1-phosphate contacts are provided by residues Gly-164, 179-180 (EK), and Ser-197.

It belongs to the bacterial/plant glucose-1-phosphate adenylyltransferase family. Homotetramer.

It catalyses the reaction alpha-D-glucose 1-phosphate + ATP + H(+) = ADP-alpha-D-glucose + diphosphate. Its pathway is glycan biosynthesis; glycogen biosynthesis. Involved in the biosynthesis of ADP-glucose, a building block required for the elongation reactions to produce glycogen. Catalyzes the reaction between ATP and alpha-D-glucose 1-phosphate (G1P) to produce pyrophosphate and ADP-Glc. The sequence is that of Glucose-1-phosphate adenylyltransferase from Corynebacterium jeikeium (strain K411).